The chain runs to 404 residues: Neutral protease 2 homolog AFLA_065450 (404 aa).

Residues Met1–Ala19 form the signal peptide. The propeptide occupies Val20–Arg185. Intrachain disulfides connect Cys191-Cys263 and Cys270-Cys288. His313 is a binding site for Zn(2+). Glu314 is an active-site residue. Zn(2+) contacts are provided by His317 and Asp328.

It belongs to the peptidase M35 family. The cofactor is Zn(2+).

The protein resides in the secreted. The catalysed reaction is Preferential cleavage of bonds with hydrophobic residues in P1'. Also 3-Asn-|-Gln-4 and 8-Gly-|-Ser-9 bonds in insulin B chain.. Functionally, secreted metalloproteinase that allows assimilation of proteinaceous substrates. Shows high activities on basic nuclear substrates such as histone and protamine. The chain is Neutral protease 2 homolog AFLA_065450 from Aspergillus flavus (strain ATCC 200026 / FGSC A1120 / IAM 13836 / NRRL 3357 / JCM 12722 / SRRC 167).